The primary structure comprises 100 residues: HssA/B-like protein 37 (100 aa).

2 disordered regions span residues 1–29 (MTLF…SGTS) and 67–100 (RSRG…CCGI). Over residues 71-93 (SCGGNRGNGNGNGGMGGGNGSCC) the composition is skewed to gly residues.

Belongs to the hssA/B family.

The sequence is that of HssA/B-like protein 37 (hssl37) from Dictyostelium discoideum (Social amoeba).